Here is a 188-residue protein sequence, read N- to C-terminus: Large ribosomal subunit protein bL35m (188 aa).

This sequence belongs to the bacterial ribosomal protein bL35 family.

The protein resides in the mitochondrion. The polypeptide is Large ribosomal subunit protein bL35m (MRPL35) (Pongo abelii (Sumatran orangutan)).